The following is a 281-amino-acid chain: MKILPVGSRFCPTDLGLVRLYLRNKVERNQSSFITTMDIHQDYPWLLPHVNNPLFNNNEWYYFVPLTERGGKILSVHRKVAARGGSEGGTWRSNDGKKEIKDGHMQKGDGLRASDDLQKVVLCRIRYKKEANVNEFGLVNHQAHQTQDALTGFADQLEMMLEGQEDREQKEEADLTGFADSLETMLEGQEDHEQPEDADLTGFADSLETMLEGHEDREQPEEAELTVTQQQQQQQQQQQRQEDCDVTQEQEKDDVMVLINNPNDALALGNYEIIDLTRVDK.

The NAC domain occupies 4 to 156; sequence LPVGSRFCPT…QDALTGFADQ (153 aa). Disordered stretches follow at residues 84–109 and 211–249; these read GGSEGGTWRSNDGKKEIKDGHMQKGD and LEGHEDREQPEEAELTVTQQQQQQQQQQQRQEDCDVTQE. Over residues 94-109 the composition is skewed to basic and acidic residues; that stretch reads NDGKKEIKDGHMQKGD. The DNA-binding element occupies 109–162; sequence DGLRASDDLQKVVLCRIRYKKEANVNEFGLVNHQAHQTQDALTGFADQLEMMLE. Residues 229 to 239 show a composition bias toward low complexity; the sequence is QQQQQQQQQQQ.

The protein localises to the nucleus. This chain is NAC domain-containing protein 6 (NAC006), found in Arabidopsis thaliana (Mouse-ear cress).